Reading from the N-terminus, the 65-residue chain is Putative per-hexamer repeat protein 2 (65 aa).

The protein is Putative per-hexamer repeat protein 2 (Phxr2) of Mus musculus (Mouse).